Consider the following 419-residue polypeptide: Potassium/proton antiporter CemA (419 aa).

The next 4 membrane-spanning stretches (helical) occupy residues 196–216, 297–317, 344–364, and 371–391; these read LASIQYGFFLLLLPWIVTLLF, IIELITDFIGIFTITVILCIA, ILLITDLCIGFHSPHGWEVLI, and FGFVPNQYITSFFVSTFPVVL.

The protein belongs to the CemA family.

The protein resides in the plastid. Its subcellular location is the chloroplast inner membrane. The enzyme catalyses K(+)(in) + H(+)(out) = K(+)(out) + H(+)(in). In terms of biological role, contributes to K(+)/H(+) antiport activity by supporting proton efflux to control proton extrusion and homeostasis in chloroplasts in a light-dependent manner to modulate photosynthesis. Prevents excessive induction of non-photochemical quenching (NPQ) under continuous-light conditions. Indirectly promotes efficient inorganic carbon uptake into chloroplasts. The sequence is that of Potassium/proton antiporter CemA from Chara vulgaris (Common stonewort).